The chain runs to 490 residues: CUGBP Elav-like family member 1 (490 aa).

2 consecutive RRM domains span residues Ile-16–Ser-99 and Arg-108–Thr-188. The interval Pro-283 to Ser-312 is disordered. An RRM 3 domain is found at Ala-405 to Ser-483.

The protein belongs to the CELF/BRUNOL family. Oligomer. Oligomerization is required for RNA-binding and EDEN-dependent deadenylation. Post-translationally, phosphorylated during oocyte maturation and dephosphorylated following egg activation. Dephosphorylation is calcium dependent and correlates with the increase in the activity of EDEN-dependent deadenylation.

The protein resides in the nucleus. The protein localises to the cytoplasm. Its function is as follows. RNA-binding protein implicated in the regulation of several post-transcriptional events. May be involved in pre-mRNA alternative splicing, mRNA translation activation and stability. Mediates the rapid and sequence-specific cytoplasmic deadenylation of EDEN-containing maternal mRNAs following fertilization. Binds to AU-rich sequences (AREs) of jun mRNA. Binds to the embryonic deadenylation element (EDEN) motif localized in the 3'-UTR of maternal mRNAs. Binds to RNA containing several repeats of the consensus sequence 5'-UGU-3'. EDEN-dependent deadenylation is enhanced by the presence of an additional cis element composed of three AUU repeats. The chain is CUGBP Elav-like family member 1 (celf1) from Xenopus tropicalis (Western clawed frog).